The primary structure comprises 378 residues: Ribosomal RNA large subunit methyltransferase G (378 aa).

The protein belongs to the methyltransferase superfamily. RlmG family.

The protein resides in the cytoplasm. The enzyme catalyses guanosine(1835) in 23S rRNA + S-adenosyl-L-methionine = N(2)-methylguanosine(1835) in 23S rRNA + S-adenosyl-L-homocysteine + H(+). Specifically methylates the guanine in position 1835 (m2G1835) of 23S rRNA. The protein is Ribosomal RNA large subunit methyltransferase G of Shigella dysenteriae serotype 1 (strain Sd197).